The sequence spans 478 residues: Cytochrome P450 monooxygenase asqL (478 aa).

Cys-407 contributes to the heme binding site.

The protein belongs to the cytochrome P450 family. It depends on heme as a cofactor.

It participates in secondary metabolite biosynthesis. It functions in the pathway alkaloid biosynthesis. The protein operates within mycotoxin biosynthesis. Its function is as follows. Cytochrome P450 monooxygenase; part of the gene cluster that mediates the biosynthesis of the aspoquinolone mycotoxins. The role of asqL within the aspoquinolone pathway has still to be determined. The first step of the pathway is catalyzed by the nonribosomal peptide synthetase asqK that condenses anthranilic acid and O-methyl-L-tyrosine to produce 4'-methoxycyclopeptin. 4'-methoxycyclopeptin is then converted to 4'-methoxydehydrocyclopeptin by the ketoglutarate-dependent dioxygenase asqJ. AsqJ also converts its first product 4'-methoxydehydrocyclopeptin to 4'-methoxycyclopenin. The following conversion of 4'-methoxycyclopenin into 4'-methoxyviridicatin is catalyzed by the cyclopenase asqI. 4'-methoxyviridicatin is the precursor of quinolone natural products, and is further converted to quinolinone B. The prenyltransferase asqH1 then catalyzes the canonical Friedel-Crafts alkylation of quinolinone B with dimethylallyl cation to yield dimethylallyl quinolone, which is subjected to FAD-dependent dehydrogenation by the FAD-linked oxidoreductase asqF to yield conjugated aryl diene. The delta(3') double bond then serves as the site of the second alkylation with DMAPP catalyzed by the prenyltransferase asqH2 to yield a carbenium ion intermediate, which can be attacked by H(2)O to yield a styrenyl quinolone containing a C3'-hydroxyprenyl chain. The FAD-dependent monooxygenase asqG performs epoxidation of the terminal C7'-C8' olefin. Finally, after dehydratation of the epoxide at C3 by asqC, the quinolone epoxide rearrangement protein asqO catalyzes an enzymatic 3-exo-tet cyclization to yield the cyclopropyl-THF ring system in aspoquinolone. This is Cytochrome P450 monooxygenase asqL from Emericella nidulans (strain FGSC A4 / ATCC 38163 / CBS 112.46 / NRRL 194 / M139) (Aspergillus nidulans).